We begin with the raw amino-acid sequence, 505 residues long: uncharacterized protein (505 aa).

14 helical membrane-spanning segments follow: residues 9–29 (ANLT…PFIV), 49–69 (YFSV…SVAA), 86–106 (AASV…AFFI), 122–142 (LSIL…GFGA), 156–176 (IQAV…ACFA), 181–201 (QIQL…FYFF), 235–255 (IGVL…LGAS), 261–281 (AAII…ASLF), 310–330 (LLLA…LTIW), 341–361 (LLFI…LFYI), 371–391 (PAIV…TLSG), 395–415 (LGLY…NAIF), 435–455 (IIGP…IQFI), and 464–484 (LIAT…MLVC).

It localises to the cell membrane. Functionally, may be involved in the production of the exopolysaccharide (EPS) component of the extracellular matrix during biofilm formation. EPS is responsible for the adhesion of chains of cells into bundles. This is an uncharacterized protein from Bacillus subtilis (strain 168).